We begin with the raw amino-acid sequence, 495 residues long: GTPase Der (495 aa).

2 EngA-type G domains span residues 3 to 166 (PVIA…MDAE) and 208 to 381 (IKLA…DCST). Residues 9–16 (GRPNVGKS), 56–60 (DTGGI), 118–121 (NKTD), 214–221 (GRPNVGKS), 261–265 (DTAGV), and 326–329 (NKWD) contribute to the GTP site. A KH-like domain is found at 382–466 (KRVGTSLLTR…PIRIQFKEGE (85 aa)).

This sequence belongs to the TRAFAC class TrmE-Era-EngA-EngB-Septin-like GTPase superfamily. EngA (Der) GTPase family. As to quaternary structure, associates with the 50S ribosomal subunit.

GTPase that plays an essential role in the late steps of ribosome biogenesis. The chain is GTPase Der from Yersinia pseudotuberculosis serotype IB (strain PB1/+).